The primary structure comprises 428 residues: D-amino acid dehydrogenase (428 aa).

FAD is bound at residue 3-17 (VVILGSGVVGVASAY).

Belongs to the DadA oxidoreductase family. FAD serves as cofactor.

The enzyme catalyses a D-alpha-amino acid + A + H2O = a 2-oxocarboxylate + AH2 + NH4(+). It functions in the pathway amino-acid degradation; D-alanine degradation; NH(3) and pyruvate from D-alanine: step 1/1. Functionally, oxidative deamination of D-amino acids. This Burkholderia vietnamiensis (strain G4 / LMG 22486) (Burkholderia cepacia (strain R1808)) protein is D-amino acid dehydrogenase.